The sequence spans 345 residues: Fructose-1,6-bisphosphatase class 1 (345 aa).

4 residues coordinate Mg(2+): Glu-90, Asp-109, Leu-111, and Asp-112. Substrate contacts are provided by residues 112–115 (DGSS) and Asn-200. Glu-272 lines the Mg(2+) pocket.

It belongs to the FBPase class 1 family. In terms of assembly, homotetramer. Mg(2+) serves as cofactor.

Its subcellular location is the cytoplasm. The catalysed reaction is beta-D-fructose 1,6-bisphosphate + H2O = beta-D-fructose 6-phosphate + phosphate. It participates in carbohydrate biosynthesis; gluconeogenesis. This chain is Fructose-1,6-bisphosphatase class 1, found in Bradyrhizobium diazoefficiens (strain JCM 10833 / BCRC 13528 / IAM 13628 / NBRC 14792 / USDA 110).